The sequence spans 380 residues: Erythronate-4-phosphate dehydrogenase (380 aa).

Substrate contacts are provided by serine 45 and threonine 66. NAD(+) contacts are provided by residues aspartate 146, threonine 174, 205–207, and aspartate 231; that span reads ASR. Residue arginine 207 is part of the active site. Glutamate 236 is an active-site residue. The active-site Proton donor is histidine 253. Residue glycine 256 participates in NAD(+) binding. Tyrosine 257 lines the substrate pocket.

This sequence belongs to the D-isomer specific 2-hydroxyacid dehydrogenase family. PdxB subfamily. Homodimer.

The protein resides in the cytoplasm. It catalyses the reaction 4-phospho-D-erythronate + NAD(+) = (R)-3-hydroxy-2-oxo-4-phosphooxybutanoate + NADH + H(+). Its pathway is cofactor biosynthesis; pyridoxine 5'-phosphate biosynthesis; pyridoxine 5'-phosphate from D-erythrose 4-phosphate: step 2/5. Its function is as follows. Catalyzes the oxidation of erythronate-4-phosphate to 3-hydroxy-2-oxo-4-phosphonooxybutanoate. This Pseudomonas putida (strain ATCC 700007 / DSM 6899 / JCM 31910 / BCRC 17059 / LMG 24140 / F1) protein is Erythronate-4-phosphate dehydrogenase.